Reading from the N-terminus, the 187-residue chain is Calcium and integrin-binding family member 3 (187 aa).

EF-hand domains are found at residues 66–101 (KDNP…MSEM), 103–138 (PRDL…LTRG), and 144–179 (EVSL…APDF). Ca(2+) is bound by residues Asp116, Asn118, Asp120, Tyr122, Asp127, Asp157, Asp159, Asp161, Arg163, and Asp168.

Monomer and homodimer. Interacts with ITGA2B (via C-terminus cytoplasmic tail region); the interaction is stabilized/increased in a calcium and magnesium-dependent manner. Interacts with TMC1.

In terms of biological role, acts a an auxiliary subunit of the sensory mechanoelectrical transduction (MET) channel in hair cells. Plays a role in regulating hair cell MET channel localization and function. The chain is Calcium and integrin-binding family member 3 (CIB3) from Homo sapiens (Human).